The following is a 394-amino-acid chain: Elongation factor Tu (394 aa).

In terms of domain architecture, tr-type G spans 10–204; sequence KPHVNVGTIG…HLDSYIPEPE (195 aa). The interval 19 to 26 is G1; that stretch reads GHVDHGKT. 19 to 26 contributes to the GTP binding site; sequence GHVDHGKT. Thr26 is a Mg(2+) binding site. Residues 60–64 form a G2 region; it reads GITIN. Positions 81-84 are G3; sequence DCPG. Residues 81–85 and 136–139 each bind GTP; these read DCPGH and NKCD. A G4 region spans residues 136–139; the sequence is NKCD. The segment at 174–176 is G5; the sequence is SAL.

Belongs to the TRAFAC class translation factor GTPase superfamily. Classic translation factor GTPase family. EF-Tu/EF-1A subfamily. Monomer.

The protein localises to the cytoplasm. It carries out the reaction GTP + H2O = GDP + phosphate + H(+). In terms of biological role, GTP hydrolase that promotes the GTP-dependent binding of aminoacyl-tRNA to the A-site of ribosomes during protein biosynthesis. This Cronobacter sakazakii (strain ATCC BAA-894) (Enterobacter sakazakii) protein is Elongation factor Tu.